The primary structure comprises 577 residues: Anthranilate synthase alpha subunit 1, chloroplastic (577 aa).

A chloroplast-targeting transit peptide spans 1-34 (MASLVLSLRIAPSTPPLGLGGGRFRGRRGAVACR).

The protein belongs to the anthranilate synthase component I family. As to quaternary structure, heterotetramer consisting of two non-identical subunits: a beta subunit and a large alpha subunit.

Its subcellular location is the plastid. It is found in the chloroplast. It carries out the reaction chorismate + L-glutamine = anthranilate + pyruvate + L-glutamate + H(+). The protein operates within amino-acid biosynthesis; L-tryptophan biosynthesis; L-tryptophan from chorismate: step 1/5. Feedback inhibition by tryptophan. In terms of biological role, part of a heterotetrameric complex that catalyzes the two-step biosynthesis of anthranilate, an intermediate in the biosynthesis of L-tryptophan. In the first step, the glutamine-binding beta subunit of anthranilate synthase (AS) provides the glutamine amidotransferase activity which generates ammonia as a substrate that, along with chorismate, is used in the second step, catalyzed by the large alpha subunit of AS to produce anthranilate. The sequence is that of Anthranilate synthase alpha subunit 1, chloroplastic (ASA1) from Oryza sativa subsp. indica (Rice).